The chain runs to 334 residues: Acryloyl-coenzyme A reductase (334 aa).

Cys38 lines the Zn(2+) pocket. Tyr39 contributes to the NADP(+) binding site. Positions 60, 90, 93, 96, 104, and 146 each coordinate Zn(2+). NADP(+) is bound by residues Ser173 to Val176 and Thr195 to Ser197.

This sequence belongs to the zinc-containing alcohol dehydrogenase family. Monomer. The cofactor is Zn(2+).

The enzyme catalyses propanoyl-CoA + NADP(+) = acryloyl-CoA + NADPH + H(+). Functionally, plays a role in autotrophic carbon fixation via the 3-hydroxypropionate/4-hydroxybutyrate cycle. Catalyzes the acryloyl-CoA dependent NADPH oxidation and formation of propionyl-CoA. Inactive towards 3-hydroxypropionyl-CoA, NADH and crotonyl-CoA. This Sulfurisphaera tokodaii (strain DSM 16993 / JCM 10545 / NBRC 100140 / 7) (Sulfolobus tokodaii) protein is Acryloyl-coenzyme A reductase.